The following is a 67-amino-acid chain: MSKLGILLTICLLLFPLTAVPLDGDQPADRPAERMQDDISSEHHPFFDPVKRCCRLSCGLGCHPCCG.

An N-terminal signal peptide occupies residues 1–19 (MSKLGILLTICLLLFPLTA). The propeptide occupies 20 to 52 (VPLDGDQPADRPAERMQDDISSEHHPFFDPVKR). Intrachain disulfides connect cysteine 53–cysteine 65, cysteine 54–cysteine 62, and cysteine 58–cysteine 66. The residue at position 64 (proline 64) is a 4-hydroxyproline; partial. Cysteine 66 carries the cysteine amide; partial modification.

Belongs to the conotoxin M superfamily. In terms of processing, has been found to be hydroxylated and amidated by Han et al. (2006), and to be unmodified by Ju et al. (2022). In terms of tissue distribution, expressed by the venom duct.

The protein resides in the secreted. This Conus marmoreus (Marble cone) protein is Conotoxin mr3d.